The primary structure comprises 499 residues: Taxadiene 5-alpha hydroxylase (499 aa).

A helical; Signal-anchor transmembrane segment spans residues 22–42 (TESFSIALSAIAGILLLLLLF). C445 is a binding site for heme.

The protein belongs to the cytochrome P450 family. Heme is required as a cofactor.

Its subcellular location is the membrane. The enzyme catalyses taxa-4(5),11(12)-diene + reduced [NADPH--hemoprotein reductase] + O2 = taxa-4(20),11-dien-5alpha-ol + oxidized [NADPH--hemoprotein reductase] + H2O + H(+). It participates in alkaloid biosynthesis; taxol biosynthesis; taxa-4(20),11-dien-5alpha-ol from geranylgeranyl diphosphate: step 2/2. Functionally, catalyzes the first oxygenation step of taxol biosynthesis. Can use both taxa-4(5),11(12)-diene and taxa-4(20),11(12)-diene as substrate. The polypeptide is Taxadiene 5-alpha hydroxylase (Taxus cuspidata (Japanese yew)).